The primary structure comprises 359 residues: Peptide chain release factor 1 (359 aa).

Q233 carries the post-translational modification N5-methylglutamine.

Belongs to the prokaryotic/mitochondrial release factor family. In terms of processing, methylated by PrmC. Methylation increases the termination efficiency of RF1.

The protein localises to the cytoplasm. In terms of biological role, peptide chain release factor 1 directs the termination of translation in response to the peptide chain termination codons UAG and UAA. This Clostridium acetobutylicum (strain ATCC 824 / DSM 792 / JCM 1419 / IAM 19013 / LMG 5710 / NBRC 13948 / NRRL B-527 / VKM B-1787 / 2291 / W) protein is Peptide chain release factor 1.